Reading from the N-terminus, the 570-residue chain is Adenine deaminase (570 aa).

It belongs to the metallo-dependent hydrolases superfamily. Adenine deaminase family. Mn(2+) serves as cofactor.

It carries out the reaction adenine + H2O + H(+) = hypoxanthine + NH4(+). The polypeptide is Adenine deaminase (Petrotoga mobilis (strain DSM 10674 / SJ95)).